The primary structure comprises 608 residues: Epsin-3 (608 aa).

Positions 8, 11, 25, 30, 63, and 73 each coordinate a 1,2-diacyl-sn-glycero-3-phospho-(1D-myo-inositol-4,5-bisphosphate). Positions 12-144 (NIVHNYSEAE…KDEERLRQER (133 aa)) constitute an ENTH domain. 2 disordered regions span residues 150–266 (TKER…QSSI) and 281–475 (STHC…GPSA). Over residues 174–189 (GSPSSYTSASSSPRYA) the composition is skewed to low complexity. A phosphoserine mark is found at Ser184 and Ser185. In terms of domain architecture, UIM spans 202–221 (EEELQLQLALAMSREEAEKG). Composition is skewed to basic and acidic residues over residues 214-229 (SREE…KGDD) and 240-260 (GQRR…EKLK). 7 repeat units span residues 287 to 289 (DPW), 310 to 312 (DPW), 337 to 339 (EPW), 353 to 355 (DPW), 370 to 372 (DPW), 495 to 497 (NPF), and 508 to 510 (NPF). A 5 X 3 AA repeats of [DE]-P-W region spans residues 287–372 (DPWDIPGLRP…KLPSTGVDPW (86 aa)). The span at 346–363 (PSGPPITDPWAPSSPTPK) shows a compositional bias: pro residues. The tract at residues 495–607 (NPFLTGLSAP…LPPQAGTNPF (113 aa)) is 3 X 3 AA repeats of N-P-F. Disordered regions lie at residues 498-530 (LTGL…SPAL) and 575-608 (GAFA…NPFL). Residues 578 to 588 (APPPASLPQPL) are compositionally biased toward pro residues. The stretch at 605–607 (NPF) is repeat 3.

The protein belongs to the epsin family.

It localises to the cytoplasm. The protein localises to the cell cortex. Its subcellular location is the perinuclear region. The protein resides in the cytoplasmic vesicle. It is found in the clathrin-coated vesicle. It localises to the nucleus. In Rattus norvegicus (Rat), this protein is Epsin-3 (Epn3).